The chain runs to 439 residues: Arginine biosynthesis bifunctional protein ArgJ, mitochondrial (439 aa).

Positions 175, 201, 212, 301, 434, and 439 each coordinate substrate. The active-site Nucleophile is the Thr212.

This sequence belongs to the ArgJ family. As to quaternary structure, heterodimer of an alpha and a beta chain. In terms of processing, the alpha and beta chains are autoproteolytically processed from a single precursor protein within the mitochondrion.

It is found in the mitochondrion matrix. The catalysed reaction is N(2)-acetyl-L-ornithine + L-glutamate = N-acetyl-L-glutamate + L-ornithine. The enzyme catalyses L-glutamate + acetyl-CoA = N-acetyl-L-glutamate + CoA + H(+). It participates in amino-acid biosynthesis; L-arginine biosynthesis; L-ornithine and N-acetyl-L-glutamate from L-glutamate and N(2)-acetyl-L-ornithine (cyclic): step 1/1. It functions in the pathway amino-acid biosynthesis; L-arginine biosynthesis; N(2)-acetyl-L-ornithine from L-glutamate: step 1/4. In terms of biological role, catalyzes two activities which are involved in the cyclic version of arginine biosynthesis: the synthesis of acetylglutamate from glutamate and acetyl-CoA, and of ornithine by transacetylation between acetylornithine and glutamate. This is Arginine biosynthesis bifunctional protein ArgJ, mitochondrial (ECM42) from Candida albicans (strain SC5314 / ATCC MYA-2876) (Yeast).